Reading from the N-terminus, the 560-residue chain is DNA-directed primase/polymerase protein (560 aa).

Positions 1–22 (MNRKWEAKLKQIEERASHYERK) form a coiled coil. Substrate-binding positions include arginine 76, 114–116 (DLE), and 165–169 (KFSRH). Aspartate 114 and glutamate 116 together coordinate Mn(2+). Residues 203-223 (EDDDSAPETTGHGFPHFSEAP) are disordered. A Phosphoserine modification is found at serine 255. Residues 288–291 (RNFR) and lysine 297 contribute to the substrate site. Zn(2+) contacts are provided by cysteine 419, histidine 426, cysteine 446, and cysteine 451. The Zinc knuckle motif motif lies at 419 to 452 (CENIGRAHKSNNIMILVDLKNEVWYQKCHDPVCK). Residues 480-507 (TTDEADETRSNETQNPHKPSPSRLSTGA) form a disordered region. The interval 481–560 (TDEADETRSN…DELIIEVLQE (80 aa)) is interaction with RPA1. The segment covering 490–507 (NETQNPHKPSPSRLSTGA) has biased composition (polar residues). Short sequence motifs (RPA1-binding motif) lie at residues 513-527 (WDNGIDDAYFLEATE) and 548-556 (EIPDELIIE).

It belongs to the eukaryotic-type primase small subunit family. As to quaternary structure, interacts with RPA1; leading to recruitment to chromatin and stimulate DNA primase activity. Interacts with SSBP1. Interacts with POLDIP2; leading to enhance DNA polymerase activity. Mn(2+) is required as a cofactor.

The protein localises to the nucleus. It is found in the mitochondrion matrix. The protein resides in the chromosome. The enzyme catalyses ssDNA + n NTP = ssDNA/pppN(pN)n-1 hybrid + (n-1) diphosphate.. It carries out the reaction DNA(n) + a 2'-deoxyribonucleoside 5'-triphosphate = DNA(n+1) + diphosphate. Functionally, DNA primase and DNA polymerase required to tolerate replication-stalling lesions by bypassing them. Required to facilitate mitochondrial and nuclear replication fork progression by initiating de novo DNA synthesis using dNTPs and acting as an error-prone DNA polymerase able to bypass certain DNA lesions. Shows a high capacity to tolerate DNA damage lesions such as 8oxoG and abasic sites in DNA. Provides different translesion synthesis alternatives when DNA replication is stalled: able to synthesize DNA primers downstream of lesions, such as ultraviolet (UV) lesions, R-loops and G-quadruplexes, to allow DNA replication to continue. Can also realign primers ahead of 'unreadable lesions' such as abasic sites and 6-4 photoproduct (6-4 pyrimidine-pyrimidinone), thereby skipping the lesion. Repriming avoids fork degradation while leading to accumulation of internal ssDNA gaps behind the forks. Also able to incorporate nucleotides opposite DNA lesions such as 8oxoG, like a regular translesion synthesis DNA polymerase. Also required for reinitiating stalled forks after UV damage during nuclear DNA replication. Required for mitochondrial DNA (mtDNA) synthesis and replication, by reinitiating synthesis after UV damage or in the presence of chain-terminating nucleotides. Prevents APOBEC family-mediated DNA mutagenesis by repriming downstream of abasic site to prohibit error-prone translesion synthesis. Has non-overlapping function with POLH. In addition to its role in DNA damage response, also required to maintain efficient nuclear and mitochondrial DNA replication in unperturbed cells. The sequence is that of DNA-directed primase/polymerase protein from Homo sapiens (Human).